A 73-amino-acid polypeptide reads, in one-letter code: Protein SlyX homolog (73 aa).

Belongs to the SlyX family.

The chain is Protein SlyX homolog from Pasteurella multocida (strain Pm70).